The sequence spans 279 residues: Homeobox protein BarH-like 2 (279 aa).

Disordered regions lie at residues 110 to 137 (APGG…RRSR) and 194 to 279 (KGGQ…PPLS). Residues 118–128 (SSESETEQPTP) show a composition bias toward polar residues. The homeobox DNA-binding region spans 133–192 (PRRSRTIFTELQLMGLEKKFQKQKYLSTPDRLDLAQSLGLTQLQVKTWYQNRRMKWKKMV). Residues 225–240 (NSQAQGQEQLEPSQGQ) are compositionally biased toward polar residues. Residues 261–279 (PPDPPQELPIPSSEPPPLS) show a composition bias toward pro residues.

The protein belongs to the BAR homeobox family. As to expression, highly expressed in adult salivary gland and at much lower levels in mammary gland, kidney and placenta.

The protein resides in the nucleus. Transcription factor. Binds optimally to the DNA consensus sequence 5'-YYTAATGRTTTTY-3'. May control the expression of neural adhesion molecules such as L1 or Ng-CAM during embryonic development of both the central and peripherical nervous system. May be involved in controlling adhesive processes in keratinizing epithelia. In Homo sapiens (Human), this protein is Homeobox protein BarH-like 2 (BARX2).